Here is a 92-residue protein sequence, read N- to C-terminus: Small ribosomal subunit protein uS19 (92 aa).

The protein belongs to the universal ribosomal protein uS19 family.

Its function is as follows. Protein S19 forms a complex with S13 that binds strongly to the 16S ribosomal RNA. The protein is Small ribosomal subunit protein uS19 of Acaryochloris marina (strain MBIC 11017).